The following is a 417-amino-acid chain: Tyrosine--tRNA ligase (417 aa).

Tyr39 contacts L-tyrosine. A 'HIGH' region motif is present at residues 44-53; the sequence is PTASSLHAGS. L-tyrosine-binding residues include Tyr176 and Gln180. The short motif at 236–240 is the 'KMSKS' region element; the sequence is KMGKS. Residue Lys239 coordinates ATP. The S4 RNA-binding domain maps to 350-417; it reads TGLLILLVQA…KKKHVLIKPL (68 aa).

This sequence belongs to the class-I aminoacyl-tRNA synthetase family. TyrS type 1 subfamily. Homodimer.

Its subcellular location is the cytoplasm. The catalysed reaction is tRNA(Tyr) + L-tyrosine + ATP = L-tyrosyl-tRNA(Tyr) + AMP + diphosphate + H(+). Catalyzes the attachment of tyrosine to tRNA(Tyr) in a two-step reaction: tyrosine is first activated by ATP to form Tyr-AMP and then transferred to the acceptor end of tRNA(Tyr). This is Tyrosine--tRNA ligase from Bartonella henselae (strain ATCC 49882 / DSM 28221 / CCUG 30454 / Houston 1) (Rochalimaea henselae).